We begin with the raw amino-acid sequence, 174 residues long: Shikimate kinase 2 (174 aa).

12–17 (GCGKTT) is an ATP binding site. Mg(2+) contacts are provided by Thr-16 and Asp-32. Residues Asp-34, Arg-58, and Gly-79 each coordinate substrate. The LID domain stretch occupies residues 112-126 (QAAPEEDLRPTLTGK). ATP is bound at residue Arg-120. Arg-139 contributes to the substrate binding site.

This sequence belongs to the shikimate kinase family. AroL subfamily. In terms of assembly, monomer. Mg(2+) is required as a cofactor.

Its subcellular location is the cytoplasm. The catalysed reaction is shikimate + ATP = 3-phosphoshikimate + ADP + H(+). It functions in the pathway metabolic intermediate biosynthesis; chorismate biosynthesis; chorismate from D-erythrose 4-phosphate and phosphoenolpyruvate: step 5/7. Catalyzes the specific phosphorylation of the 3-hydroxyl group of shikimic acid using ATP as a cosubstrate. The polypeptide is Shikimate kinase 2 (Shigella boydii serotype 18 (strain CDC 3083-94 / BS512)).